The chain runs to 192 residues: MSVFRRSVQCVGVLPSILAQRSSLLARPANLQFLKTNSSKFVPQVTANVSRRMYHKNVLDHYNNPRNVGTLPKGDPDVGIGLVGAPACGDVMRLAIRVNKDGVIEDVKFKTFGCGSAIASSSYVTTMVKGMTLEEASKIKNTQIAKELCLPPVKLHCSMLAEDAIKSAVKHYRSKQLTPVGTTAGAIESATA.

A mitochondrion-targeting transit peptide spans 1-53 (MSVFRRSVQCVGVLPSILAQRSSLLARPANLQFLKTNSSKFVPQVTANVSRRM).

This sequence belongs to the NifU family. In terms of assembly, homodimer. Component of the core Fe-S cluster (ISC) assembly machinery. [2Fe-2S] cluster serves as cofactor.

Its subcellular location is the mitochondrion. It localises to the mitochondrion matrix. It participates in cofactor biosynthesis; iron-sulfur cluster biosynthesis. In terms of biological role, scaffold protein for the de novo synthesis of iron-sulfur (Fe-S) clusters within mitochondria, which is required for maturation of both mitochondrial and cytoplasmic [2Fe-2S] and [4Fe-4S] proteins. First, a [2Fe-2S] cluster is transiently assembled on the scaffold protein isu1. In a second step, the cluster is released from isu1, transferred to a glutaredoxin, followed by the formation of mitochondrial [2Fe-2S] proteins, the synthesis of [4Fe-4S] clusters and their target-specific insertion into the recipient apoproteins. Cluster assembly on isu1 depends on the function of the cysteine desulfurase complex nfs1-isd11, which serves as the sulfur donor for cluster synthesis, the iron-binding protein frataxin as the putative iron donor, and the electron transfer chain comprised of ferredoxin reductase and ferredoxin, which receive their electrons from NADH. In Schizosaccharomyces pombe (strain 972 / ATCC 24843) (Fission yeast), this protein is Iron sulfur cluster assembly protein 1, mitochondrial (isu1).